We begin with the raw amino-acid sequence, 81 residues long: uncharacterized protein (81 aa).

Residues 55 to 81 (LDKRNSNNKIEKSENTGENHDNNQDQK) form a disordered region.

This is an uncharacterized protein from Thermoproteus tenax virus 1 (strain KRA1) (TTV1).